Consider the following 80-residue polypeptide: MHAKVGDYLVVKGTTTERHDQHAEIIEVRSADGSPPYVVRWLVNGHETTVYPGSDAVVVTATEHAEAEKRAAARAGHAAT.

To M.leprae U650M.

This is an uncharacterized protein from Mycobacterium bovis (strain ATCC BAA-935 / AF2122/97).